We begin with the raw amino-acid sequence, 347 residues long: Nuclear distribution protein nudE-like 1 (347 aa).

Positions 28–190 form a coiled coil; it reads QSFQEARDEL…LAVRERQQEV (163 aa). The self-association stretch occupies residues 56 to 166; it reads VQAEQRNRDL…LDEKESLLVS (111 aa). Residues 64–189 are interaction with KATNB1; it reads DLQADNQRLK…ELAVRERQQE (126 aa). Residues 114–133 are required for interaction with PAFAH1B1; the sequence is YVRELEQANDDLERAKRATI. The interaction with CENPF stretch occupies residues 175–347; sequence RDLRQELAVR…SAPGMLPLSV (173 aa). Positions 189-256 are interaction with YWHAE; the sequence is EVTRKSAPSS…SARISALNIV (68 aa). The interaction with NEFL stretch occupies residues 191–347; sequence TRKSAPSSPT…SAPGMLPLSV (157 aa). The tract at residues 195 to 256 is interaction with KATNA1; that stretch reads APSSPTLDCE…SARISALNIV (62 aa). Position 215 is a phosphoserine (serine 215). Threonine 219 carries the post-translational modification Phosphothreonine; by CDK1 and MAPK1. At serine 231 the chain carries Phosphoserine. The interval 241–280 is interaction with DISC1; it reads TSPLTPSARISALNIVGDLLRKVGALESKLAACRNFAKDQ. Serine 242 carries the phosphoserine; by CDK1 modification. Threonine 245 carries the post-translational modification Phosphothreonine; by CDK1 and MAPK1. Residues 256-291 are required for localization to the centrosome and interaction with dynein, dynactin, tubulin gamma, PCM1 and PCNT; it reads VGDLLRKVGALESKLAACRNFAKDQASRKSYISGNV. The S-palmitoyl cysteine; by ZDHHC2, ZDHHC3 and ZDHHC7 moiety is linked to residue cysteine 273. The tract at residues 314-347 is disordered; the sequence is KGAVNGFDPAPPPPDPGLGSSRPSSAPGMLPLSV. Serine 346 carries the phosphoserine modification.

This sequence belongs to the nudE family. As to quaternary structure, self-associates. Interacts with DISC1, dynein, dynactin, tubulin gamma, KATNA1, KATNB1, microtubules, PAFAH1B1, PCM1, PCNT, and YWHAE. Interacts directly with NEFL and indirectly with NEFH. Interacts (via C-terminus) with CENPF. Interacts with ZNF365. Interacts with PLEKHM1 (via N- and C-terminus). Interacts with GTP-bound RAB9A; the interaction may lead to RAB9A-dynein motor tethering. Post-translationally, phosphorylated in mitosis. Can be phosphorylated by CDK1, CDK5 and MAPK1. Phosphorylation by CDK5 promotes interaction with KATNA1 and YWHAE. In terms of processing, palmitoylation at Cys-273 reduces affinity for dynein.

Its subcellular location is the cytoplasm. The protein localises to the cytoskeleton. It localises to the microtubule organizing center. It is found in the centrosome. The protein resides in the chromosome. Its subcellular location is the centromere. The protein localises to the kinetochore. It localises to the spindle. Required for organization of the cellular microtubule array and microtubule anchoring at the centrosome. May regulate microtubule organization at least in part by targeting the microtubule severing protein KATNA1 to the centrosome. Also positively regulates the activity of the minus-end directed microtubule motor protein dynein. May enhance dynein-mediated microtubule sliding by targeting dynein to the microtubule plus ends. Required for several dynein- and microtubule-dependent processes such as the maintenance of Golgi integrity, the centripetal motion of secretory vesicles and the coupling of the nucleus and centrosome. Also required during brain development for the migration of newly formed neurons from the ventricular/subventricular zone toward the cortical plate. Required for mitosis in some cell types but appears to be dispensible for mitosis in cortical neuronal progenitors, which instead requires NDE1. Facilitates the polymerization of neurofilaments from the individual subunits NEFH and NEFL. Positively regulates lysosome peripheral distribution and ruffled border formation in osteoclasts. Plays a role, together with DISC1, in the regulation of neurite outgrowth. May act as a RAB9A/B effector that tethers RAB9-associated late endosomes to the dynein motor for their retrograde transport to the trans-Golgi network. The chain is Nuclear distribution protein nudE-like 1 (NDEL1) from Macaca fascicularis (Crab-eating macaque).